The following is a 147-amino-acid chain: Hemoglobin subunit gamma-2 (147 aa).

Residues 3 to 147 (NFTAEDKAAI…VASALGSRYH (145 aa)) enclose the Globin domain. Thr-13 carries the post-translational modification Phosphothreonine. 3 positions are modified to phosphoserine: Ser-45, Ser-51, and Ser-53. Position 60 is an N6-acetyllysine (Lys-60). Position 64 (His-64) interacts with heme b. The residue at position 83 (Lys-83) is an N6-acetyllysine. His-93 is a binding site for heme b. S-nitrosocysteine is present on Cys-94. Residues Ser-140 and Ser-144 each carry the phosphoserine modification.

The protein belongs to the globin family. Heterotetramer of two alpha chains and two gamma chains in fetal hemoglobin (Hb F). In terms of tissue distribution, red blood cells.

Gamma chains make up the fetal hemoglobin F, in combination with alpha chains. This Cebus albifrons (White-fronted capuchin) protein is Hemoglobin subunit gamma-2 (HBG2).